Here is a 90-residue protein sequence, read N- to C-terminus: uncharacterized protein (90 aa).

The next 3 helical transmembrane spans lie at 5–27, 40–62, and 67–89; these read FDIL…IIYI, IYLS…TFVA, and MSVV…YSIV.

It is found in the cell membrane. This is an uncharacterized protein from Archaeoglobus fulgidus (strain ATCC 49558 / DSM 4304 / JCM 9628 / NBRC 100126 / VC-16).